The chain runs to 82 residues: Putative membrane protein insertion efficiency factor (82 aa).

It belongs to the UPF0161 family.

Its subcellular location is the cell membrane. In terms of biological role, could be involved in insertion of integral membrane proteins into the membrane. This chain is Putative membrane protein insertion efficiency factor, found in Streptococcus uberis (strain ATCC BAA-854 / 0140J).